The following is a 1140-amino-acid chain: Rho GTPase-activating protein gacF (1140 aa).

8 disordered regions span residues 1–145, 189–236, 455–504, 520–644, 661–700, 720–759, 773–927, and 952–1095; these read MKTH…KPSR, ESDI…IEPI, INNN…STSF, EVQQ…GLES, ESSK…DEDE, ETND…NNIS, AKVT…STLS, and TSSP…NHTN. Composition is skewed to low complexity over residues 10 to 26 and 35 to 71; these read LGGL…LKSF and QQQQ…ASSS. The stretch at 28-55 forms a coiled coil; the sequence is TEEVIHEQQQQQQQHNNNNNNNNNHQRQ. Polar residues predominate over residues 72-82; sequence IEETSGYLSKT. Composition is skewed to low complexity over residues 83–136 and 193–222; these read SSSS…TSSP and DNGS…SSSS. In terms of domain architecture, Rho-GAP spans 234–409; it reads EPISQSTEDY…RLIENYHSIF (176 aa). 2 stretches are compositionally biased toward low complexity: residues 456-475 and 482-493; these read NNNS…SPYK and PKSSPKLNNRNS. A compositionally biased stretch (polar residues) spans 494–504; the sequence is ISPKLSSSTSF. A coiled-coil region spans residues 517 to 548; sequence ISDEVQQEQQNQQQQQDEQQDEQQDEQQDEQQ. Over residues 520 to 533 the composition is skewed to low complexity; sequence EVQQEQQNQQQQQD. A compositionally biased stretch (acidic residues) spans 534–549; sequence EQQDEQQDEQQDEQQD. Residues 550 to 566 are compositionally biased toward low complexity; the sequence is EQNSNSTSINTSSSSIT. The span at 572-596 shows a compositional bias: polar residues; sequence STVQYLNRINTCRRPSSWTNNNRIK. Over residues 597–606 the composition is skewed to basic residues; it reads QQQHHHHHHQ. Residues 607-631 are compositionally biased toward low complexity; it reads QQQQHQQHQQQQSSSSESNSSLTSS. 2 stretches are compositionally biased toward polar residues: residues 632–641 and 672–684; these read PQKRLNSVNG and NRQM…NNIG. Over residues 724-759 the composition is skewed to low complexity; that stretch reads DNNNNDQINNSNSSNNIPKTTITTTTNNTTTTNNIS. The span at 773–796 shows a compositional bias: polar residues; the sequence is AKVTPTPTPAPMQTSSFLSTKQTN. A compositionally biased stretch (low complexity) spans 797–822; the sequence is SPSSSSSPSSTVSSTSSSPSSSLSSS. Residues 823–854 are compositionally biased toward polar residues; the sequence is IDNKTMSNVNYNRFQPANRTVSSPNVRNFSVP. 3 stretches are compositionally biased toward low complexity: residues 891–914, 952–1058, and 1065–1079; these read KPKN…NSTP, TSSP…TSST, and HSNS…SSSS.

The protein resides in the cytoplasm. In terms of biological role, rho GTPase-activating protein involved in the signal transduction pathway. This is Rho GTPase-activating protein gacF (gacF) from Dictyostelium discoideum (Social amoeba).